Here is a 283-residue protein sequence, read N- to C-terminus: MIVTEKAPAKLNLSLDTPMRYFDGSPQWDMVMVSADLADYVTVETHRRPATIKVYTNSGFLPNDQRNLAYQAAHILRSRFHCKDGVTIRIKKQIPVAAGLGGGSSDAAAVLRALNSIWRLGLSLSELAKIALTIDSDVPYCIYNKLAHVTGHGEKIELLPPQPHYWAVIAKQKISVSTPQILRQINYEKLQHLNNEALLTNLKKEDWQEATKYMGNVLEPLTMKFYPEIGRLKNKMKELGADVAQMSGTGPTVFAICHTESRAKRIQNSIRGFCRDVHVVTLL.

Lysine 10 is a catalytic residue. 95 to 105 lines the ATP pocket; the sequence is PVAAGLGGGSS. Aspartate 137 is an active-site residue.

It belongs to the GHMP kinase family. IspE subfamily.

The catalysed reaction is 4-CDP-2-C-methyl-D-erythritol + ATP = 4-CDP-2-C-methyl-D-erythritol 2-phosphate + ADP + H(+). Its pathway is isoprenoid biosynthesis; isopentenyl diphosphate biosynthesis via DXP pathway; isopentenyl diphosphate from 1-deoxy-D-xylulose 5-phosphate: step 3/6. Catalyzes the phosphorylation of the position 2 hydroxy group of 4-diphosphocytidyl-2C-methyl-D-erythritol. This Limosilactobacillus reuteri (strain DSM 20016) (Lactobacillus reuteri) protein is 4-diphosphocytidyl-2-C-methyl-D-erythritol kinase.